A 118-amino-acid polypeptide reads, in one-letter code: Protein YoeF (118 aa).

The polypeptide is Protein YoeF (yoeF) (Escherichia coli (strain K12)).